The chain runs to 100 residues: Replication restart protein PriB (100 aa).

Residues 1–99 (MGFNNLVSLA…LRIQNIQEYK (99 aa)) form the SSB domain.

Belongs to the PriB family. In terms of assembly, homodimer. Interacts with PriA and DnaT. Component of the replication restart primosome. Primosome assembly occurs via a 'hand-off' mechanism. PriA binds to replication forks, subsequently PriB then DnaT bind; DnaT then displaces ssDNA to generate the helicase loading substrate.

Its function is as follows. Involved in the restart of stalled replication forks, which reloads the replicative helicase on sites other than the origin of replication; the PriA-PriB pathway is the major replication restart pathway. During primosome assembly it facilitates complex formation between PriA and DnaT on DNA; stabilizes PriA on DNA. Stimulates the DNA unwinding activity of PriA helicase. In Neisseria meningitidis serogroup B (strain ATCC BAA-335 / MC58), this protein is Replication restart protein PriB.